A 190-amino-acid polypeptide reads, in one-letter code: Remorin (190 aa).

The segment covering 1–12 has biased composition (basic and acidic residues); sequence MAEEQKTSKVDV. 2 disordered regions span residues 1–45 and 50–69; these read MAEE…VESK and VEKP…SADR. Position 14 is a phosphoserine (Ser14). Thr58 carries the post-translational modification Phosphothreonine. Residues 92 to 147 are a coiled coil; that stretch reads EKSKAENRAQKKISDVHAWENSKKAAVEAQLRKIEEKLEKKKAQYGEKMKNKVAAI.

Belongs to the remorin family. As to quaternary structure, may polymerize to form filamentous structures. In terms of tissue distribution, expressed in roots, leaves, stems, flowers and siliques, with a maximal expression in apical regions.

In terms of biological role, exhibits a non sequence-specific DNA-binding activity. The protein is Remorin (DBP) of Arabidopsis thaliana (Mouse-ear cress).